Reading from the N-terminus, the 378-residue chain is Sterol 24-C-methyltransferase erg6 (378 aa).

It belongs to the class I-like SAM-binding methyltransferase superfamily. Erg6/SMT family.

Its subcellular location is the nucleus. The protein resides in the endoplasmic reticulum. The catalysed reaction is zymosterol + S-adenosyl-L-methionine = fecosterol + S-adenosyl-L-homocysteine + H(+). The enzyme catalyses lanosterol + S-adenosyl-L-methionine = eburicol + S-adenosyl-L-homocysteine + H(+). It functions in the pathway steroid metabolism; ergosterol biosynthesis. Functionally, sterol 24-C-methyltransferase; part of the third module of ergosterol biosynthesis pathway that includes by the late steps of the pathway. Erg6 catalyzes the methyl transfer from S-adenosyl-methionine to the C-24 of zymosterol to form fecosterol. The third module or late pathway involves the ergosterol synthesis itself through consecutive reactions that mainly occur in the endoplasmic reticulum (ER) membrane. Firstly, the squalene synthase erg9 catalyzes the condensation of 2 farnesyl pyrophosphate moieties to form squalene, which is the precursor of all steroids. Secondly, squalene is converted into lanosterol by the consecutive action of the squalene epoxidase erg1 and the lanosterol synthase erg7. The lanosterol 14-alpha-demethylase erg11/cyp1 catalyzes C14-demethylation of lanosterol to produce 4,4'-dimethyl cholesta-8,14,24-triene-3-beta-ol. In the next steps, a complex process involving various demethylation, reduction and desaturation reactions catalyzed by the C-14 reductase erg24 and the C-4 demethylation complex erg25-erg26-erg27 leads to the production of zymosterol. Erg28 likely functions in the C-4 demethylation complex reaction by tethering erg26 and Erg27 to the endoplasmic reticulum or to facilitate interaction between these proteins. Then, the sterol 24-C-methyltransferase erg6 catalyzes the methyl transfer from S-adenosyl-methionine to the C-24 of zymosterol to form fecosterol. The C-8 sterol isomerase erg2 catalyzes the reaction which results in unsaturation at C-7 in the B ring of sterols and thus converts fecosterol to episterol. The sterol-C5-desaturases erg31 and erg32 then catalyze the introduction of a C-5 double bond in the B ring to produce 5-dehydroepisterol. The C-22 sterol desaturase erg5 further converts 5-dehydroepisterol into ergosta-5,7,22,24(28)-tetraen-3beta-ol by forming the C-22(23) double bond in the sterol side chain. Finally, ergosta-5,7,22,24(28)-tetraen-3beta-ol is substrate of the C-24(28) sterol reductase erg4 to produce ergosterol. In the genus Schizosaccharomyces, a second route exists between lanosterol and fecosterol, via the methylation of lanosterol to eburicol by erg6, followed by C14-demethylation by erg11/cyp1 and C4-demethylation by the demethylation complex erg25-erg26-erg27. This Schizosaccharomyces pombe (strain 972 / ATCC 24843) (Fission yeast) protein is Sterol 24-C-methyltransferase erg6.